Consider the following 170-residue polypeptide: Photosystem II extrinsic protein V (170 aa).

Residues 1–33 (MASVFSSLRRSLKGLLVLIPVLIGLAVTSPAQA) form the signal peptide. Heme c is bound by residues cysteine 70, cysteine 73, histidine 74, and histidine 125.

It belongs to the cytochrome c family. PsbV subfamily. As to quaternary structure, PSII is composed of 1 copy each of membrane proteins PsbA, PsbB, PsbC, PsbD, PsbE, PsbF, PsbH, PsbI, PsbJ, PsbK, PsbL, PsbM, PsbT, PsbX, PsbY, PsbZ, Psb30/Ycf12, peripheral proteins PsbO, CyanoQ (PsbQ), PsbU, PsbV and a large number of cofactors. It forms dimeric complexes. Heme c serves as cofactor.

It is found in the cellular thylakoid membrane. Functionally, one of the extrinsic, lumenal subunits of photosystem II (PSII). PSII is a light-driven water plastoquinone oxidoreductase, using light energy to abstract electrons from H(2)O, generating a proton gradient subsequently used for ATP formation. The extrinsic proteins stabilize the structure of photosystem II oxygen-evolving complex (OEC), the ion environment of oxygen evolution and protect the OEC against heat-induced inactivation. Low-potential cytochrome c that plays a role in the OEC of PSII. The polypeptide is Photosystem II extrinsic protein V (Synechococcus sp. (strain CC9605)).